A 356-amino-acid chain; its full sequence is Mitogen-activated protein kinase PMK11 (356 aa).

Residues 24–312 (YDIQDVVGEG…VEEALKHPYL (289 aa)) form the Protein kinase domain. Residues 30–38 (VGEGAYGVV) and Lys53 contribute to the ATP site.

It belongs to the protein kinase superfamily. CMGC Ser/Thr protein kinase family. MAP kinase subfamily. Requires Mg(2+) as cofactor. Post-translationally, phosphorylated by MST7.

It carries out the reaction L-seryl-[protein] + ATP = O-phospho-L-seryl-[protein] + ADP + H(+). The enzyme catalyses L-threonyl-[protein] + ATP = O-phospho-L-threonyl-[protein] + ADP + H(+). Its function is as follows. Mitogen-activated protein kinase; part of the MST11-MST7-PMK1 MAP kinase (MAPK) cascade that is essential for appressorium formation, penetration and invasive growth. Central regulator of appressorium development that acts downstream of the cAMP signal. The MST11-MST7-PMK1 MAP kinase cascade transduces signals from the cell surface sensors MDB2 and SHO1 that recognize various surface signals such as surface hydrophobicity, cutin monomers, and rice leaf waxes. Regulates expression of secreted fungal effector proteins implicated of host immune defenses, preventing reactive oxygen species generation and excessive callose deposition at plasmodesmata. Furthermore, controls the hyphal constriction required for fungal growth from one rice cell to the neighboring cell, enabling host tissue colonization and blast disease. Targets downstream of the PMK1-MAPK pathway include transcription factor MST12 and pathogenicity-related genes GAS1 and GAS2, both of which are expressed during appressorium formation, even if regulation of MST12 is not associated with expression of GAS1 or GAS2. The chain is Mitogen-activated protein kinase PMK11 from Pyricularia oryzae (strain 70-15 / ATCC MYA-4617 / FGSC 8958) (Rice blast fungus).